A 352-amino-acid polypeptide reads, in one-letter code: Ion-translocating oxidoreductase complex subunit D (352 aa).

A run of 4 helical transmembrane segments spans residues Ile-20–Gly-40, Gly-42–Leu-62, Val-69–Pro-91, and Pro-123–Leu-143. Thr-187 carries the FMN phosphoryl threonine modification. Transmembrane regions (helical) follow at residues Leu-215–Leu-235, Trp-242–Phe-262, Leu-267–Leu-287, Leu-301–Pro-321, and Asp-322–Thr-342.

The protein belongs to the NqrB/RnfD family. As to quaternary structure, the complex is composed of six subunits: RsxA, RsxB, RsxC, RsxD, RsxE and RsxG. Requires FMN as cofactor.

It localises to the cell inner membrane. Its function is as follows. Part of a membrane-bound complex that couples electron transfer with translocation of ions across the membrane. Required to maintain the reduced state of SoxR. This is Ion-translocating oxidoreductase complex subunit D from Salmonella choleraesuis (strain SC-B67).